A 255-amino-acid polypeptide reads, in one-letter code: tRNA (guanine-N(1)-)-methyltransferase (255 aa).

Residues G117 and 137–142 (LGDFVL) each bind S-adenosyl-L-methionine.

This sequence belongs to the RNA methyltransferase TrmD family. As to quaternary structure, homodimer.

The protein resides in the cytoplasm. The enzyme catalyses guanosine(37) in tRNA + S-adenosyl-L-methionine = N(1)-methylguanosine(37) in tRNA + S-adenosyl-L-homocysteine + H(+). In terms of biological role, specifically methylates guanosine-37 in various tRNAs. This chain is tRNA (guanine-N(1)-)-methyltransferase, found in Paraburkholderia phymatum (strain DSM 17167 / CIP 108236 / LMG 21445 / STM815) (Burkholderia phymatum).